Consider the following 124-residue polypeptide: Small ribosomal subunit protein uS12 (124 aa).

Residues 1-42 form a disordered region; that stretch reads MPTTQQLIRKGRKTEEETSDAPALEGSPQRRGVCTRVYTTTP. Aspartate 89 bears the 3-methylthioaspartic acid mark. Positions 105 to 124 are disordered; the sequence is AGVEERRQGRSKYGTKKPRE. Over residues 113–124 the composition is skewed to basic residues; it reads GRSKYGTKKPRE.

This sequence belongs to the universal ribosomal protein uS12 family. Part of the 30S ribosomal subunit. Contacts proteins S8 and S17. May interact with IF1 in the 30S initiation complex.

Its function is as follows. With S4 and S5 plays an important role in translational accuracy. In terms of biological role, interacts with and stabilizes bases of the 16S rRNA that are involved in tRNA selection in the A site and with the mRNA backbone. Located at the interface of the 30S and 50S subunits, it traverses the body of the 30S subunit contacting proteins on the other side and probably holding the rRNA structure together. The combined cluster of proteins S8, S12 and S17 appears to hold together the shoulder and platform of the 30S subunit. The chain is Small ribosomal subunit protein uS12 from Salinibacter ruber (strain DSM 13855 / M31).